Consider the following 1883-residue polypeptide: Lysophospholipase NTE1 (1883 aa).

Topologically, residues methionine 1–asparagine 75 are cytoplasmic. Residues leucine 76 to leucine 96 form a helical membrane-spanning segment. The Lumenal segment spans residues histidine 97–glutamine 103. The helical transmembrane segment at leucine 104–leucine 124 threads the bilayer. Topologically, residues arginine 125 to isoleucine 1883 are cytoplasmic. Disordered regions lie at residues histidine 284–proline 327, glutamate 355–alanine 410, serine 618–proline 693, serine 716–serine 764, glutamate 921–serine 1069, and leucine 1084–serine 1108. Residues asparagine 311 to proline 327 show a composition bias toward polar residues. The segment covering alanine 372–threonine 383 has biased composition (low complexity). The span at proline 650–isoleucine 668 shows a compositional bias: polar residues. A nucleoside 3',5'-cyclic phosphate contacts are provided by residues alanine 863 to isoleucine 1158 and arginine 1166 to arginine 1285. Residues threonine 936–proline 948 are compositionally biased toward polar residues. Over residues leucine 964 to aspartate 974 the composition is skewed to basic and acidic residues. Polar residues-rich tracts occupy residues isoleucine 988–serine 998 and leucine 1084–glutamine 1100. Residues leucine 1544–leucine 1708 form the PNPLA domain. The GXGXXG signature appears at glycine 1548–glycine 1553. Residues glycine 1575 to glycine 1579 carry the GXSXG motif. The active-site Nucleophile is serine 1577. Aspartate 1695 (proton acceptor) is an active-site residue. Residues aspartate 1695–glycine 1697 carry the DGA/G motif. Positions aspartate 1852–isoleucine 1883 are disordered. A compositionally biased stretch (basic residues) spans arginine 1861–alanine 1874.

Belongs to the NTE family.

It is found in the endoplasmic reticulum membrane. It carries out the reaction a 1-acyl-sn-glycero-3-phosphocholine + H2O = sn-glycerol 3-phosphocholine + a fatty acid + H(+). Inhibited by organophosphorus esters. In terms of biological role, intracellular phospholipase B that catalyzes the double deacylation of phosphatidylcholine (PC) to glycerophosphocholine (GroPCho). Plays an important role in membrane lipid homeostasis. Responsible for the rapid PC turnover in response to inositol, elevated temperatures, or when choline is present in the growth medium. This chain is Lysophospholipase NTE1 (NTE1), found in Mycosarcoma maydis (Corn smut fungus).